The following is a 392-amino-acid chain: Succinate--CoA ligase [ADP-forming] subunit beta (392 aa).

The ATP-grasp domain maps to 9 to 236; the sequence is KELFAAHGVP…PSAADPLEAK (228 aa). Residues K45, 52 to 54, V94, and E99 contribute to the ATP site; that span reads GRG. Mg(2+) is bound by residues N191 and D205. Residues N256 and 318–320 each bind substrate; that span reads GIT.

This sequence belongs to the succinate/malate CoA ligase beta subunit family. In terms of assembly, heterotetramer of two alpha and two beta subunits. Mg(2+) serves as cofactor.

The enzyme catalyses succinate + ATP + CoA = succinyl-CoA + ADP + phosphate. The catalysed reaction is GTP + succinate + CoA = succinyl-CoA + GDP + phosphate. It functions in the pathway carbohydrate metabolism; tricarboxylic acid cycle; succinate from succinyl-CoA (ligase route): step 1/1. Functionally, succinyl-CoA synthetase functions in the citric acid cycle (TCA), coupling the hydrolysis of succinyl-CoA to the synthesis of either ATP or GTP and thus represents the only step of substrate-level phosphorylation in the TCA. The beta subunit provides nucleotide specificity of the enzyme and binds the substrate succinate, while the binding sites for coenzyme A and phosphate are found in the alpha subunit. The sequence is that of Succinate--CoA ligase [ADP-forming] subunit beta from Acidothermus cellulolyticus (strain ATCC 43068 / DSM 8971 / 11B).